A 130-amino-acid polypeptide reads, in one-letter code: Profilin-1 (130 aa).

The protein belongs to the profilin family. Interacts with actin. Interacts with RHO1 (GTP-bound form).

Its subcellular location is the cytoplasm. It localises to the cytoskeleton. It is found in the cell projection. The protein resides in the phagocytic cup. The protein localises to the cytoplasmic vesicle. Its subcellular location is the phagosome. Its function is as follows. Binds to actin and affects the structure of the cytoskeleton. At high concentrations, profilin prevents the polymerization of actin, whereas it enhances it at low concentrations. By binding to PIP2, it inhibits the formation of IP3 and DG. In Entamoeba histolytica (strain ATCC 30459 / HM-1:IMSS / ABRM), this protein is Profilin-1.